A 571-amino-acid polypeptide reads, in one-letter code: Proline--tRNA ligase (571 aa).

Belongs to the class-II aminoacyl-tRNA synthetase family. ProS type 1 subfamily. Homodimer.

It is found in the cytoplasm. The enzyme catalyses tRNA(Pro) + L-proline + ATP = L-prolyl-tRNA(Pro) + AMP + diphosphate. In terms of biological role, catalyzes the attachment of proline to tRNA(Pro) in a two-step reaction: proline is first activated by ATP to form Pro-AMP and then transferred to the acceptor end of tRNA(Pro). As ProRS can inadvertently accommodate and process non-cognate amino acids such as alanine and cysteine, to avoid such errors it has two additional distinct editing activities against alanine. One activity is designated as 'pretransfer' editing and involves the tRNA(Pro)-independent hydrolysis of activated Ala-AMP. The other activity is designated 'posttransfer' editing and involves deacylation of mischarged Ala-tRNA(Pro). The misacylated Cys-tRNA(Pro) is not edited by ProRS. The chain is Proline--tRNA ligase from Histophilus somni (strain 2336) (Haemophilus somnus).